The primary structure comprises 512 residues: Maturase K (512 aa).

Belongs to the intron maturase 2 family. MatK subfamily.

It is found in the plastid. Its subcellular location is the chloroplast. Usually encoded in the trnK tRNA gene intron. Probably assists in splicing its own and other chloroplast group II introns. In Lemna aequinoctialis (Lesser duckweed), this protein is Maturase K.